The following is a 259-amino-acid chain: Deoxyribose-phosphate aldolase (259 aa).

Asp-102 functions as the Proton donor/acceptor in the catalytic mechanism. The active-site Schiff-base intermediate with acetaldehyde is the Lys-167. Lys-201 (proton donor/acceptor) is an active-site residue.

This sequence belongs to the DeoC/FbaB aldolase family. DeoC type 2 subfamily.

It localises to the cytoplasm. The catalysed reaction is 2-deoxy-D-ribose 5-phosphate = D-glyceraldehyde 3-phosphate + acetaldehyde. The protein operates within carbohydrate degradation; 2-deoxy-D-ribose 1-phosphate degradation; D-glyceraldehyde 3-phosphate and acetaldehyde from 2-deoxy-alpha-D-ribose 1-phosphate: step 2/2. Functionally, catalyzes a reversible aldol reaction between acetaldehyde and D-glyceraldehyde 3-phosphate to generate 2-deoxy-D-ribose 5-phosphate. The sequence is that of Deoxyribose-phosphate aldolase from Escherichia coli O8 (strain IAI1).